Here is a 207-residue protein sequence, read N- to C-terminus: Dephospho-CoA kinase (207 aa).

The DPCK domain maps to 10–207 (ILGLTGGIGS…FYLTLRGGQS (198 aa)). 18–23 (GSGKSA) contacts ATP.

The protein belongs to the CoaE family.

It localises to the cytoplasm. It carries out the reaction 3'-dephospho-CoA + ATP = ADP + CoA + H(+). Its pathway is cofactor biosynthesis; coenzyme A biosynthesis; CoA from (R)-pantothenate: step 5/5. In terms of biological role, catalyzes the phosphorylation of the 3'-hydroxyl group of dephosphocoenzyme A to form coenzyme A. This is Dephospho-CoA kinase from Pseudomonas syringae pv. syringae (strain B728a).